The sequence spans 585 residues: Mitochondrial sodium/calcium exchanger protein (585 aa).

A signal peptide spans 1–26 (MASRWLALLWAPVFLCVALILETASG). Residues 27 to 95 (TGDPSTKAHG…GIFCYFPPNL (69 aa)) lie on the Extracellular side of the membrane. N-linked (GlcNAc...) asparagine glycosylation occurs at Asn46. Residues 96-116 (LPLAITLYVFWLLYLFLILGV) form a helical membrane-spanning segment. Topologically, residues 117-140 (TAAKFFCPNLSAISTNLKLSHNVA) are cytoplasmic. Residues 141 to 161 (GVTFLAFGNGAPDIFSALVAF) traverse the membrane as a helical segment. Residues 162–168 (SDPRTAG) are Extracellular-facing. Residues 169–189 (LAIGALFGAGVLVTTVVAGGI) traverse the membrane as a helical segment. Residues 190–205 (TILHPFMAASRPFLRD) are Cytoplasmic-facing. A helical membrane pass occupies residues 206–226 (IAFYMVAVFLTFTALYLGRIT). Over 227–229 (LTW) the chain is Extracellular. A helical transmembrane segment spans residues 230-250 (ALGYLGLYVFYVVTVIICTWV). At 251–325 (YQRQRSRSLV…KWRTQSISWR (75 aa)) the chain is on the cytoplasmic side. Residue Ser258 is modified to Phosphoserine; by PKA. A helical transmembrane segment spans residues 326–346 (VLKVVKLPVEFLLLLTVPVVD). The Extracellular segment spans residues 347 to 360 (PDKDDRNWKRPLNC). A helical transmembrane segment spans residues 361 to 381 (LQLVISPLVLVLTLQSGVYGI). Topologically, residues 382-383 (YE) are cytoplasmic. Residues 384–404 (IGGLLPVWAVVVIVGTALASV) form a helical membrane-spanning segment. Over 405 to 416 (TFFATSNREPPR) the chain is Extracellular. A helical membrane pass occupies residues 417-437 (LHWLFAFLGFLTSALWINAAA). Topologically, residues 438 to 445 (TEVVNILR) are cytoplasmic. A helical membrane pass occupies residues 446-466 (SLGVIFRLSNTVLGLTLLAWG). Topologically, residues 467–491 (NSIGDAFSDFTLARQGYPRMAFSAC) are extracellular. The helical transmembrane segment at 492-512 (FGGIIFNILVGVGLGCLLQII) threads the bilayer. Topologically, residues 513–525 (RNHVVEVKLEPDG) are cytoplasmic. Residues 526–546 (LLVWVLASALGLSLIFSLVSV) form a helical membrane-spanning segment. Residues 547 to 559 (PLQCFQLSKAYGL) are Extracellular-facing. A helical membrane pass occupies residues 560–580 (CLLLFYICFLVVVLLTEFGVI). Residues 581-585 (HLKKA) are Cytoplasmic-facing.

Belongs to the Ca(2+):cation antiporter (CaCA) (TC 2.A.19) family. SLC24A subfamily. In terms of processing, phosphorylation at Ser-258 by PKA prevents calcium overload. As to expression, ubiquitously expressed. Expressed in dental tissues.

It is found in the mitochondrion inner membrane. The protein resides in the cell membrane. The enzyme catalyses Ca(2+)(in) + 3 Na(+)(out) = Ca(2+)(out) + 3 Na(+)(in). It catalyses the reaction 3 Li(+)(out) + Ca(2+)(in) = 3 Li(+)(in) + Ca(2+)(out). With respect to regulation, inhibited by the sodium/calcium exchanger inhibitor CGP-37157. Strongly inhibited by zinc. In terms of biological role, mitochondrial sodium/calcium antiporter that mediates sodium-dependent calcium efflux from mitochondrion, by mediating the exchange of 3 sodium ions per 1 calcium ion. Plays a central role in mitochondrial calcium homeostasis by mediating mitochondrial calcium extrusion: calcium efflux is essential for mitochondrial function and cell survival, notably in cardiomyocytes. Regulates rates of glucose-dependent insulin secretion in pancreatic beta-cells during the first phase of insulin secretion: acts by mediating efflux of calcium from mitochondrion, thereby affecting cytoplasmic calcium responses. Required for store-operated Ca(2+) entry (SOCE) and Ca(2+) release-activated Ca(2+) (CRAC) channel regulation: sodium transport by SLC8B1 leads to promote calcium-shuttling that modulates mitochondrial redox status, thereby regulating SOCE activity. Involved in B-lymphocyte chemotaxis. Able to transport Ca(2+) in exchange of either Li(+) or Na(+), explaining how Li(+) catalyzes Ca(2+) exchange. In contrast to other members of the family its function is independent of K(+). The protein is Mitochondrial sodium/calcium exchanger protein of Mus musculus (Mouse).